The sequence spans 234 residues: Glutathione S-transferase sirG (234 aa).

The 85-residue stretch at 15-99 (LYVVKATPTS…YLTDAYDHEG (85 aa)) folds into the GST N-terminal domain. The GST C-terminal domain occupies 105-230 (DLWERTQVNN…KALSQKFRPS (126 aa)).

Belongs to the GST superfamily.

The catalysed reaction is RX + glutathione = an S-substituted glutathione + a halide anion + H(+). The protein operates within mycotoxin biosynthesis. Its function is as follows. Glutathione S-transferase; part of the gene cluster that mediates the biosynthesis of sirodesmin PL, an epipolythiodioxopiperazine (ETP) characterized by a disulfide bridged cyclic dipeptide and that acts as a phytotoxin which is involved in the blackleg didease of canola. SirD catalyzes the O-prenylation of L-tyrosine (L-Tyr) in the presence of dimethylallyl diphosphate (DMAPP) to yield 4-O-dimethylallyl-L-Tyr, and therefore represents probably the first pathway-specific enzyme in the biosynthesis of sirodesmin PL. 4-O-dimethylallyl-L-Tyr, then undergoes condensation with L-Ser in a reaction catalyzed by the non-ribosomal peptide synthase sirP to form the diketopiperazine (DKP) backbone. Further bishydroxylation of the DKP performed by the cytochrome P450 monooxygenase sirC leads to the production of the intermediate phomamide. This step is essential to form the reactive thiol group required for toxicity of sirodesmin PL. The next steps of sirodesmin biosynthesis are not well understood yet, but some predictions could be made from intermediate compounds identification. Phomamide is converted into phomalizarine via oxidation, probably by sirT. Further oxidation, methylation (by sirM or sirN) and reduction steps convert phomalizarine to deacetyl sirodesmin. Finally, acetyltransferase sirH probably acetylates deacetyl sirodesmin to produce sirodesmin PL. This chain is Glutathione S-transferase sirG, found in Leptosphaeria maculans (Blackleg fungus).